A 705-amino-acid polypeptide reads, in one-letter code: Elongation factor G (705 aa).

The region spanning 6–282 (NKVRNIGIMA…AVVDFLPSPL (277 aa)) is the tr-type G domain. GTP is bound by residues 15-22 (AHIDAGKT), 79-83 (DTPGH), and 133-136 (NKMD).

Belongs to the TRAFAC class translation factor GTPase superfamily. Classic translation factor GTPase family. EF-G/EF-2 subfamily.

The protein resides in the cytoplasm. Catalyzes the GTP-dependent ribosomal translocation step during translation elongation. During this step, the ribosome changes from the pre-translocational (PRE) to the post-translocational (POST) state as the newly formed A-site-bound peptidyl-tRNA and P-site-bound deacylated tRNA move to the P and E sites, respectively. Catalyzes the coordinated movement of the two tRNA molecules, the mRNA and conformational changes in the ribosome. The chain is Elongation factor G from Corynebacterium glutamicum (strain ATCC 13032 / DSM 20300 / JCM 1318 / BCRC 11384 / CCUG 27702 / LMG 3730 / NBRC 12168 / NCIMB 10025 / NRRL B-2784 / 534).